A 669-amino-acid polypeptide reads, in one-letter code: Probable pectinesterase/pectinesterase inhibitor 21 (669 aa).

Residues 16–36 (IVITISSVLLISMVVAVTVGV) traverse the membrane as a helical segment. Asn-52, Asn-81, Asn-94, Asn-281, and Asn-300 each carry an N-linked (GlcNAc...) asparagine glycan. Positions 52–205 (NASVKAVKDV…IELTHNGLAI (154 aa)) are pectinesterase inhibitor 21. The segment at 255–551 (DIVVAQDGSG…FTPAQYIQGD (297 aa)) is pectinesterase 21. Positions 330 and 360 each coordinate substrate. The active-site Proton donor; for pectinesterase activity is the Asp-383. A disulfide bridge connects residues Cys-397 and Cys-417. Catalysis depends on Asp-404, which acts as the Nucleophile; for pectinesterase activity. Residue Asn-416 is glycosylated (N-linked (GlcNAc...) asparagine). Positions 472 and 474 each coordinate substrate. The disordered stretch occupies residues 615-669 (AYTGTASPESSIKVSSSTETASPESSFTEASTASPESSIMVASTESSGSFFSMFT). Residues 616-628 (YTGTASPESSIKV) are compositionally biased toward polar residues. Residues 629–652 (SSSTETASPESSFTEASTASPESS) show a composition bias toward low complexity. The segment covering 654-669 (MVASTESSGSFFSMFT) has biased composition (polar residues).

It in the N-terminal section; belongs to the PMEI family. This sequence in the C-terminal section; belongs to the pectinesterase family. As to expression, expressed in flower buds.

It is found in the membrane. The enzyme catalyses [(1-&gt;4)-alpha-D-galacturonosyl methyl ester](n) + n H2O = [(1-&gt;4)-alpha-D-galacturonosyl](n) + n methanol + n H(+). The protein operates within glycan metabolism; pectin degradation; 2-dehydro-3-deoxy-D-gluconate from pectin: step 1/5. Acts in the modification of cell walls via demethylesterification of cell wall pectin. The protein is Probable pectinesterase/pectinesterase inhibitor 21 (PME21) of Arabidopsis thaliana (Mouse-ear cress).